The sequence spans 555 residues: CTP synthase (555 aa).

The interval 1-272 (MQPTSTTTKH…DAYVVRKLDL (272 aa)) is amidoligase domain. CTP is bound at residue S19. UTP is bound at residue S19. ATP is bound by residues 20–25 (SLGKGL) and D77. Mg(2+) contacts are provided by D77 and E146. Residues 153 to 155 (DIE), 193 to 198 (KTKPTQ), and K229 each bind CTP. UTP is bound by residues 193 to 198 (KTKPTQ) and K229. A Glutamine amidotransferase type-1 domain is found at 297–548 (TVALVGKYID…VKAAVARQVA (252 aa)). G360 provides a ligand contact to L-glutamine. C387 functions as the Nucleophile; for glutamine hydrolysis in the catalytic mechanism. L-glutamine is bound by residues 388–391 (LGLQ), E411, and R473. Catalysis depends on residues H521 and E523.

Belongs to the CTP synthase family. In terms of assembly, homotetramer.

It carries out the reaction UTP + L-glutamine + ATP + H2O = CTP + L-glutamate + ADP + phosphate + 2 H(+). The enzyme catalyses L-glutamine + H2O = L-glutamate + NH4(+). It catalyses the reaction UTP + NH4(+) + ATP = CTP + ADP + phosphate + 2 H(+). It participates in pyrimidine metabolism; CTP biosynthesis via de novo pathway; CTP from UDP: step 2/2. Allosterically activated by GTP, when glutamine is the substrate; GTP has no effect on the reaction when ammonia is the substrate. The allosteric effector GTP functions by stabilizing the protein conformation that binds the tetrahedral intermediate(s) formed during glutamine hydrolysis. Inhibited by the product CTP, via allosteric rather than competitive inhibition. Its function is as follows. Catalyzes the ATP-dependent amination of UTP to CTP with either L-glutamine or ammonia as the source of nitrogen. Regulates intracellular CTP levels through interactions with the four ribonucleotide triphosphates. The chain is CTP synthase from Streptomyces griseus subsp. griseus (strain JCM 4626 / CBS 651.72 / NBRC 13350 / KCC S-0626 / ISP 5235).